The chain runs to 330 residues: 4-hydroxythreonine-4-phosphate dehydrogenase (330 aa).

Residues H133 and T134 each contribute to the substrate site. A divalent metal cation is bound by residues H163, H208, and H263. K271, N280, and R289 together coordinate substrate.

This sequence belongs to the PdxA family. Homodimer. Zn(2+) serves as cofactor. It depends on Mg(2+) as a cofactor. Requires Co(2+) as cofactor.

The protein localises to the cytoplasm. The catalysed reaction is 4-(phosphooxy)-L-threonine + NAD(+) = 3-amino-2-oxopropyl phosphate + CO2 + NADH. Its pathway is cofactor biosynthesis; pyridoxine 5'-phosphate biosynthesis; pyridoxine 5'-phosphate from D-erythrose 4-phosphate: step 4/5. Its function is as follows. Catalyzes the NAD(P)-dependent oxidation of 4-(phosphooxy)-L-threonine (HTP) into 2-amino-3-oxo-4-(phosphooxy)butyric acid which spontaneously decarboxylates to form 3-amino-2-oxopropyl phosphate (AHAP). The sequence is that of 4-hydroxythreonine-4-phosphate dehydrogenase from Azoarcus sp. (strain BH72).